Reading from the N-terminus, the 231-residue chain is Aspartate/glutamate leucyltransferase (231 aa).

This sequence belongs to the R-transferase family. Bpt subfamily.

It is found in the cytoplasm. The enzyme catalyses N-terminal L-glutamyl-[protein] + L-leucyl-tRNA(Leu) = N-terminal L-leucyl-L-glutamyl-[protein] + tRNA(Leu) + H(+). It carries out the reaction N-terminal L-aspartyl-[protein] + L-leucyl-tRNA(Leu) = N-terminal L-leucyl-L-aspartyl-[protein] + tRNA(Leu) + H(+). Its function is as follows. Functions in the N-end rule pathway of protein degradation where it conjugates Leu from its aminoacyl-tRNA to the N-termini of proteins containing an N-terminal aspartate or glutamate. The sequence is that of Aspartate/glutamate leucyltransferase from Pseudoalteromonas atlantica (strain T6c / ATCC BAA-1087).